The sequence spans 284 residues: 2-dehydro-3-deoxyphosphooctonate aldolase (284 aa).

It belongs to the KdsA family.

It localises to the cytoplasm. The enzyme catalyses D-arabinose 5-phosphate + phosphoenolpyruvate + H2O = 3-deoxy-alpha-D-manno-2-octulosonate-8-phosphate + phosphate. Its pathway is carbohydrate biosynthesis; 3-deoxy-D-manno-octulosonate biosynthesis; 3-deoxy-D-manno-octulosonate from D-ribulose 5-phosphate: step 2/3. It participates in bacterial outer membrane biogenesis; lipopolysaccharide biosynthesis. In Bordetella petrii (strain ATCC BAA-461 / DSM 12804 / CCUG 43448), this protein is 2-dehydro-3-deoxyphosphooctonate aldolase.